The primary structure comprises 211 residues: Dual specificity protein phosphatase 26 (211 aa).

The Tyrosine-protein phosphatase domain occupies 60 to 207; that stretch reads NHADEVWPGL…LLALDRRLRQ (148 aa). C152 serves as the catalytic Phosphocysteine intermediate.

It belongs to the protein-tyrosine phosphatase family. Non-receptor class dual specificity subfamily. As to quaternary structure, interacts with HSF4. As to expression, brain. In the brain it is expressed ubiquitously except in the hippocampus. Expressed in embryonal cancers (retinoblastoma, neuroepithilioma and neuroblastoma) and in anaplatic thyroid cancer.

It localises to the cytoplasm. Its subcellular location is the nucleus. The protein localises to the golgi apparatus. It catalyses the reaction O-phospho-L-tyrosyl-[protein] + H2O = L-tyrosyl-[protein] + phosphate. The catalysed reaction is O-phospho-L-seryl-[protein] + H2O = L-seryl-[protein] + phosphate. The enzyme catalyses O-phospho-L-threonyl-[protein] + H2O = L-threonyl-[protein] + phosphate. In terms of biological role, inactivates MAPK1 and MAPK3 which leads to dephosphorylation of heat shock factor protein 4 and a reduction in its DNA-binding activity. Inhibits MAP kinase p38 by dephosphorylating it and inhibits p38-mediated apoptosis in anaplastic thyroid cancer cells. Can also induce activation of MAP kinase p38 and c-Jun N-terminal kinase (JNK). This Homo sapiens (Human) protein is Dual specificity protein phosphatase 26 (DUSP26).